Consider the following 263-residue polypeptide: 4-hydroxy-2-oxo-heptane-1,7-dioate aldolase (263 aa).

H45 functions as the Proton acceptor in the catalytic mechanism. Q147 contributes to the substrate binding site. A divalent metal cation is bound at residue E149. Substrate contacts are provided by A174 and D175. A divalent metal cation is bound at residue D175.

Belongs to the HpcH/HpaI aldolase family. Homohexamer; trimer of dimers. A divalent metal cation is required as a cofactor.

The catalysed reaction is 4-hydroxy-2-oxoheptanedioate = succinate semialdehyde + pyruvate. The protein operates within aromatic compound metabolism; 4-hydroxyphenylacetate degradation; pyruvate and succinate semialdehyde from 4-hydroxyphenylacetate: step 7/7. Functionally, catalyzes the reversible retro-aldol cleavage of 4-hydroxy-2-ketoheptane-1,7-dioate (HKHD) to pyruvate and succinic semialdehyde. The chain is 4-hydroxy-2-oxo-heptane-1,7-dioate aldolase from Salmonella enteritidis PT4 (strain P125109).